The primary structure comprises 362 residues: B3 domain-containing protein IDEF1 (362 aa).

A disordered region spans residues 30 to 91; sequence VPFPNPFPAP…TPTPTPRGFA (62 aa). The span at 48–70 shows a compositional bias: basic residues; sequence PHNHNHNHNHNHNIHNSHNHNHN. Positions 253–355 form a DNA-binding region, TF-B3; sequence LRKELTKSDV…KFIIRGEKAI (103 aa).

Post-translationally, polyubiquitinated. Ubiquitination leads to its subsequent degradation via the proteasome pathway. As to expression, expressed in roots.

The protein resides in the nucleus. Functionally, transcription regulator involved in iron deficiency response and tolerance. May regulate directly iron transporters or other transcription factors involved in iron-deficiency response. Binds specifically to the DNA sequence 5'-CATGC-3' of the IDE1 element found in the promoter of the barley iron deficiency-inducible gene IDS2. This Oryza sativa subsp. japonica (Rice) protein is B3 domain-containing protein IDEF1 (IDEF1).